We begin with the raw amino-acid sequence, 432 residues long: Glutamate-1-semialdehyde 2,1-aminomutase 2 (432 aa).

Lysine 268 is subject to N6-(pyridoxal phosphate)lysine.

It belongs to the class-III pyridoxal-phosphate-dependent aminotransferase family. HemL subfamily. Homodimer. Requires pyridoxal 5'-phosphate as cofactor.

The protein resides in the cytoplasm. The catalysed reaction is (S)-4-amino-5-oxopentanoate = 5-aminolevulinate. It functions in the pathway porphyrin-containing compound metabolism; protoporphyrin-IX biosynthesis; 5-aminolevulinate from L-glutamyl-tRNA(Glu): step 2/2. In Listeria monocytogenes serotype 4b (strain CLIP80459), this protein is Glutamate-1-semialdehyde 2,1-aminomutase 2.